Reading from the N-terminus, the 274-residue chain is MAHVKNHDYQILPPSIWPFFGAIGAFVMLTGAVAWMKGITFFGLPVEGPWMFLIGLVGVLYVMFGWWADVVNEGETGEHTPVVRIGLQYGFILFIMSEVMFFVAWFWAFIKNALYPMGPDSPIKDGVWPPEGIVTFDPWHLPLINTLILLLSGVAVTWAHHAFVLEGDRKTTINGLIVAVILGVCFTGLQAYEYSHAAFGLADTVYAGAFYMATGFHGAHVIIGTIFLFVCLIRLLKGQMTQKQHVGFEAAAWYWHFVDVVWLFLFVVIYIWGR.

Over 2–15 (AHVKNHDYQILPPS) the chain is Cytoplasmic. Residues 16 to 36 (IWPFFGAIGAFVMLTGAVAWM) traverse the membrane as a helical segment. The Periplasmic segment spans residues 37–48 (KGITFFGLPVEG). Residues 49-77 (PWMFLIGLVGVLYVMFGWWADVVNEGETG) traverse the membrane as a helical segment. At 78–79 (EH) the chain is on the cytoplasmic side. Residues 80–115 (TPVVRIGLQYGFILFIMSEVMFFVAWFWAFIKNALY) form a helical membrane-spanning segment. Over 116-139 (PMGPDSPIKDGVWPPEGIVTFDPW) the chain is Periplasmic. A helical transmembrane segment spans residues 140 to 166 (HLPLINTLILLLSGVAVTWAHHAFVLE). Over 167–168 (GD) the chain is Cytoplasmic. The helical transmembrane segment at 169–197 (RKTTINGLIVAVILGVCFTGLQAYEYSHA) threads the bilayer. Topologically, residues 198–203 (AFGLAD) are periplasmic. A helical transmembrane segment spans residues 204 to 237 (TVYAGAFYMATGFHGAHVIIGTIFLFVCLIRLLK). Residues 238–244 (GQMTQKQ) lie on the Cytoplasmic side of the membrane. The helical transmembrane segment at 245–274 (HVGFEAAAWYWHFVDVVWLFLFVVIYIWGR) threads the bilayer.

This sequence belongs to the cytochrome c oxidase subunit 3 family.

Its subcellular location is the cell inner membrane. The catalysed reaction is 4 Fe(II)-[cytochrome c] + O2 + 8 H(+)(in) = 4 Fe(III)-[cytochrome c] + 2 H2O + 4 H(+)(out). The chain is Cytochrome c oxidase subunit 3 (ctaE) from Paracoccus denitrificans.